The following is a 63-amino-acid chain: Large ribosomal subunit protein uL29 (63 aa).

Belongs to the universal ribosomal protein uL29 family.

This Shewanella baltica (strain OS223) protein is Large ribosomal subunit protein uL29.